The following is a 340-amino-acid chain: Uroporphyrinogen decarboxylase (340 aa).

Substrate is bound by residues Arg21–Arg25, Phe40, Asp71, Tyr148, Ser203, and His316.

This sequence belongs to the uroporphyrinogen decarboxylase family. In terms of assembly, homodimer.

The protein resides in the cytoplasm. It carries out the reaction uroporphyrinogen III + 4 H(+) = coproporphyrinogen III + 4 CO2. Its pathway is porphyrin-containing compound metabolism; protoporphyrin-IX biosynthesis; coproporphyrinogen-III from 5-aminolevulinate: step 4/4. Its function is as follows. Catalyzes the decarboxylation of four acetate groups of uroporphyrinogen-III to yield coproporphyrinogen-III. This Campylobacter jejuni subsp. jejuni serotype O:2 (strain ATCC 700819 / NCTC 11168) protein is Uroporphyrinogen decarboxylase.